The primary structure comprises 157 residues: Cyclic pyranopterin monophosphate synthase (157 aa).

Substrate contacts are provided by residues M74 to H76 and M110 to E111. Residue D125 is part of the active site.

It belongs to the MoaC family. Homohexamer; trimer of dimers.

The catalysed reaction is (8S)-3',8-cyclo-7,8-dihydroguanosine 5'-triphosphate = cyclic pyranopterin phosphate + diphosphate. It functions in the pathway cofactor biosynthesis; molybdopterin biosynthesis. Catalyzes the conversion of (8S)-3',8-cyclo-7,8-dihydroguanosine 5'-triphosphate to cyclic pyranopterin monophosphate (cPMP). This is Cyclic pyranopterin monophosphate synthase from Peptoclostridium acidaminophilum (Eubacterium acidaminophilum).